Consider the following 286-residue polypeptide: Beta-lactamase SHV-29 (286 aa).

A signal peptide spans 1 to 21 (MRYIRLCIISLLATLPLAVHA). Catalysis depends on Ser-66, which acts as the Acyl-ester intermediate. Residues Cys-73 and Cys-119 are joined by a disulfide bond. Glu-164 acts as the Proton acceptor in catalysis. 230 to 232 (KTG) is a substrate binding site.

The protein belongs to the class-A beta-lactamase family.

It carries out the reaction a beta-lactam + H2O = a substituted beta-amino acid. In Klebsiella pneumoniae, this protein is Beta-lactamase SHV-29 (bla).